Reading from the N-terminus, the 218-residue chain is Protein THO1 (218 aa).

An SAP domain is found at 4 to 38; it reads YSSLTVVQLKDLLTKRNLSVGGLKNELVQRLIKDD. Position 22 is a phosphoserine (S22). 2 disordered regions span residues 37 to 123 and 177 to 218; these read DDEE…LSPE and LVSR…GYRR. Positions 47–57 are enriched in polar residues; sequence VSPQEQNQEQG. A phosphoserine mark is found at S58 and S68. A compositionally biased stretch (basic and acidic residues) spans 72 to 96; the sequence is TEKKEVSSEPKETNEPKEENKDVQK. 2 stretches are compositionally biased toward low complexity: residues 102–122 and 186–203; these read SATASENEQAAASTAAPALSP and SGNNGKFKNRNKNANNRS. The segment covering 204–218 has biased composition (basic residues); that stretch reads RVSKNRRGNRSGYRR.

Belongs to the SAP domain-containing ribonucleoprotein family. As to quaternary structure, interacts with SUB2 in the presence of RNA; this interaction facilitates RNA binding of SUB2.

Its function is as follows. Facilitates RNA binding of SUB2 and likely plays a role in mRNA export. Suppressor of the transcriptional defect of HPR1 by overexpression. This Saccharomyces cerevisiae (strain ATCC 204508 / S288c) (Baker's yeast) protein is Protein THO1 (THO1).